We begin with the raw amino-acid sequence, 463 residues long: MSAPILFPLSAPESSFTIAGRLFHHAWPVLVAQLLSMSMLIADTVITGRYGTLDLAAVAVGSGVYISIVMLLVGVLQAVAPTVAHHFGARRVDAIGPALQQGFWLALMLALPGIALLAFPGFLLELSSVPADVAGKTRDYLLATAFGLPAVLLYRTFYAFNNALGRPRALMMISFIVTSTHIPLAWALVHGAFGLPPLGAIGCGISTAIVNWIAFACGAGYLAHNRDYRPYRLFANWQPPRRRDLLALLKLGIPMGLSTFIEVSSFTLIALFAARLGAEAVAGHRVVANLAALIYMLPLAISIAILVLVGQAAGAREPARARATVRVGMGLTVGLVALIGVLLWVGREPVVALFSADPAVRAVALGLVFYICIYQIFDAVQTVAAHALRGYKVTFMPMLLHALCFWGIALAGGYWLAFHAPGREQSPTVAGFWEASVVATILASVLFGWLLRVVMRRPQNVQT.

The next 11 helical transmembrane spans lie at 59–81 (AVGSGVYISIVMLLVGVLQAVAP), 102–124 (GFWLALMLALPGIALLAFPGFLL), 139–161 (DYLLATAFGLPAVLLYRTFYAFN), 173–195 (ISFIVTSTHIPLAWALVHGAFGL), 200–222 (AIGCGISTAIVNWIAFACGAGYL), 251–273 (LGIPMGLSTFIEVSSFTLIALFA), 288–310 (ANLAALIYMLPLAISIAILVLVG), 323–345 (ATVRVGMGLTVGLVALIGVLLWV), 360–377 (VRAVALGLVFYICIYQIF), 397–419 (PMLLHALCFWGIALAGGYWLAFH), and 429–451 (VAGFWEASVVATILASVLFGWLL).

It belongs to the multi antimicrobial extrusion (MATE) (TC 2.A.66.1) family.

It is found in the cell inner membrane. Its function is as follows. Multidrug efflux pump. This Aromatoleum aromaticum (strain DSM 19018 / LMG 30748 / EbN1) (Azoarcus sp. (strain EbN1)) protein is Probable multidrug resistance protein NorM (norM).